An 85-amino-acid polypeptide reads, in one-letter code: U4-theraphotoxin-Hhn1a (85 aa).

Positions M1–A22 are cleaved as a signal peptide. The propeptide occupies E23–R48. 3 disulfide bridges follow: C52–C66, C56–C77, and C71–C82.

This sequence belongs to the neurotoxin 12 (Hwtx-2) family. 02 (Hwtx-2) subfamily. In terms of assembly, monomer. As to expression, expressed by the venom gland.

The protein resides in the secreted. Neurotoxin active on both insects and mammals. This chain is U4-theraphotoxin-Hhn1a, found in Cyriopagopus hainanus (Chinese bird spider).